The primary structure comprises 123 residues: Small ribosomal subunit protein uS12 (123 aa).

Asp89 bears the 3-methylthioaspartic acid mark.

It belongs to the universal ribosomal protein uS12 family. Part of the 30S ribosomal subunit. Contacts proteins S8 and S17. May interact with IF1 in the 30S initiation complex.

Its function is as follows. With S4 and S5 plays an important role in translational accuracy. In terms of biological role, interacts with and stabilizes bases of the 16S rRNA that are involved in tRNA selection in the A site and with the mRNA backbone. Located at the interface of the 30S and 50S subunits, it traverses the body of the 30S subunit contacting proteins on the other side and probably holding the rRNA structure together. The combined cluster of proteins S8, S12 and S17 appears to hold together the shoulder and platform of the 30S subunit. The protein is Small ribosomal subunit protein uS12 of Chelativorans sp. (strain BNC1).